The primary structure comprises 999 residues: Collagen alpha-1(I) chain (999 aa).

A disordered region spans residues 1-999 (SYGYDEKSAG…PGPPGPPGPP (999 aa)). Position 7 is an allysine (Lys7). Ser8 bears the Phosphoserine mark. 4-hydroxyproline is present on residues Pro27, Pro30, Pro33, Pro42, Pro45, Pro48, Pro62, Pro77, Pro83, Pro92, and Pro98. Over residues 65-79 (NGDDGEAGKPGRPGE) the composition is skewed to basic and acidic residues. Residue Lys101 is modified to 5-hydroxylysine; alternate. Residue Lys101 is glycosylated (O-linked (Gal...) hydroxylysine; alternate). Ser107 carries the post-translational modification Phosphoserine. Residues 115–131 (DAGPAGPKGEPGSPGEN) show a composition bias toward low complexity. 4-hydroxyproline occurs at positions 125, 128, 134, 143, 149, 170, 179, 182, 209, 212, 224, 230, 239, 245, 248, and 263. Low complexity predominate over residues 149 to 167 (PGASGPAGARGNDGATGAA). Positions 169 to 181 (PPGPTGPAGPPGF) are enriched in pro residues. Low complexity predominate over residues 215–254 (AGAAGPAGNPGADGQPGAKGANGAPGIAGAPGFPGARGPS). Lys266 carries the 5-hydroxylysine modification. Pro272, Pro275, Pro287, Pro296, Pro311, Pro317, Pro326, and Pro332 each carry 4-hydroxyproline. The segment covering 321-330 (GERGGPGSRG) has biased composition (gly residues). The residue at position 341 (Lys341) is a 5-hydroxylysine. 4-hydroxyproline is present on residues Pro350, Pro359, Pro365, Pro371, Pro380, Pro383, Pro392, Pro401, Pro407, Pro419, Pro429, Pro432, Pro450, Pro468, Pro474, Pro480, Pro486, Pro492, Pro498, Pro510, Pro526, Pro532, Pro538, and Pro547. The segment covering 374 to 400 (KGLTGSPGSPGPDGKTGPPGPAGQDGR) has biased composition (low complexity). Over residues 462 to 489 (QGPAGSPGFQGLPGPAGPPGEAGKPGEQ) the composition is skewed to low complexity. Over residues 522-535 (APGAPGSQGAPGLQ) the composition is skewed to low complexity. A 5-hydroxylysine modification is found at Lys559. 4-hydroxyproline is present on residues Pro565, Pro580, and Pro586. Residues 592–606 (SGPSGPAGPTGARGA) show a composition bias toward low complexity. Ser595 bears the Phosphoserine mark. Pro607, Pro613, Pro616, Pro625, Pro631, Pro649, Pro658, and Pro667 each carry 4-hydroxyproline. The span at 619-646 (AGFAGPPGADGQPGAKGEPGDAGAKGDA) shows a compositional bias: low complexity. The span at 648–660 (PPGPAGPTGPPGP) shows a compositional bias: pro residues. Lys670 bears the 5-hydroxylysine mark. Residues 675–691 (SAGPPGATGFPGAAGRV) are compositionally biased toward low complexity. A 4-hydroxyproline mark is found at Pro679 and Pro685. Position 693 is a 3-hydroxyproline (Pro693). Residues Pro694, Pro703, Pro706, Pro727, Pro736, Pro745, Pro754, Pro772, Pro781, Pro784, Pro790, Pro805, Pro811, Pro817, Pro826, and Pro832 each carry the 4-hydroxyproline modification. Residues 720 to 729 (ETGPAGRPGE) are compositionally biased toward low complexity. Residues 739–754 (SGEKGSPGADGPAGAP) show a composition bias toward low complexity. Residues 804–814 (PPGPVGPPGLA) are compositionally biased toward pro residues. Residues 816-831 (PPGESGREGSPGAEGS) are compositionally biased toward low complexity. Lys841 carries the post-translational modification 5-hydroxylysine. Positions 849–864 (PGPPGAPGAPGAPGPV) are enriched in pro residues. 4-hydroxyproline is present on residues Pro852, Pro855, and Pro858. The span at 885-899 (AGPAGARGPAGPQGP) shows a compositional bias: low complexity. Positions 900–914 (RGDKGETGEQGDRGI) are enriched in basic and acidic residues. A 5-hydroxylysine modification is found at Lys903. The residue at position 915 (Lys915) is a 5-hydroxylysine; alternate. The O-linked (Gal...) hydroxylysine; alternate glycan is linked to Lys915. 4 positions are modified to 4-hydroxyproline: Pro930, Pro933, Pro951, and Pro966. Residues 933–966 (PGEQGPSGASGPAGPRGPPGSAGSPGKDGLNGLP) are compositionally biased toward low complexity. At Pro971 the chain carries 3-hydroxyproline. Pro972 bears the 4-hydroxyproline mark. Positions 984–999 (VGPPGPPGPPGPPGPP) are enriched in pro residues. Position 986 is a 3-hydroxyproline (Pro986). At Pro987 the chain carries 4-hydroxyproline. Pro989 carries the 3-hydroxyproline modification. 4-hydroxyproline is present on Pro990. The residue at position 992 (Pro992) is a 3-hydroxyproline. A 4-hydroxyproline mark is found at Pro993, Pro996, and Pro999.

It belongs to the fibrillar collagen family. Trimers of one alpha 2(I) and two alpha 1(I) chains. Contains mostly 4-hydroxyproline. Proline residues at the third position of the tripeptide repeating unit (G-X-Y) are hydroxylated in some or all of the chains. Post-translationally, contains 3-hydroxyproline at a few sites. This modification occurs on the first proline residue in the sequence motif Gly-Pro-Hyp, where Hyp is 4-hydroxyproline. In terms of processing, lysine residues at the third position of the tripeptide repeating unit (G-X-Y) are 5-hydroxylated in some or all of the chains. O-glycosylated on hydroxylated lysine residues. The O-linked glycan consists of a Glc-Gal disaccharide. Expressed in bones.

Its subcellular location is the secreted. The protein localises to the extracellular space. The protein resides in the extracellular matrix. Its function is as follows. Type I collagen is a member of group I collagen (fibrillar forming collagen). The polypeptide is Collagen alpha-1(I) chain (Choloepus hoffmanni (Hoffmann's two-fingered sloth)).